Here is a 266-residue protein sequence, read N- to C-terminus: MTEPLTETPELSAKYAWFFDLDGTLAEIKPHPDQVVVPDNILQGLQLLATASDGALALISGRSMVELDALAKPYRFPLAGVHGAERRDINGKTHIVHLPDAIARDISVQLHTVIAQYPGAELEAKGMAFALHYRQAPQHEDALMTLAQRITQIWPQMALQQGKCVVEIKPRGTSKGEAIAAFMQEAPFIGRTPVFLGDDLTDESGFAVVNRLGGMSVKIGTGATQASWRLAGVPDVWSWLEMITTALQQKRENNRSDDYESFSRSI.

The Nucleophile role is filled by D20. The Mg(2+) site is built by D20, D22, and D198. 20–22 (DLD) is a binding site for substrate.

This sequence belongs to the trehalose phosphatase family. Mg(2+) serves as cofactor. It depends on Mn(2+) as a cofactor. Co(2+) is required as a cofactor. Requires Zn(2+) as cofactor.

The enzyme catalyses alpha,alpha-trehalose 6-phosphate + H2O = alpha,alpha-trehalose + phosphate. It participates in glycan biosynthesis; trehalose biosynthesis. Its function is as follows. Removes the phosphate from trehalose 6-phosphate (Tre6P) to produce free trehalose. Also catalyzes the dephosphorylation of glucose-6-phosphate (Glu6P) and 2-deoxyglucose-6-phosphate (2dGlu6P). In Escherichia coli (strain K12), this protein is Trehalose-6-phosphate phosphatase (otsB).